The following is a 41-amino-acid chain: Photosystem I reaction center subunit IX (41 aa).

A helical membrane pass occupies residues 7–27; it reads YLSSAPILATIWFAITAGILI.

Belongs to the PsaJ family.

The protein resides in the cellular thylakoid membrane. Its function is as follows. May help in the organization of the PsaE and PsaF subunits. The chain is Photosystem I reaction center subunit IX from Synechococcus sp. (strain ATCC 27144 / PCC 6301 / SAUG 1402/1) (Anacystis nidulans).